A 605-amino-acid polypeptide reads, in one-letter code: Protein cueball (605 aa).

The signal sequence occupies residues 1 to 31 (MAYIDQKHNTFWDDFAIALRDKIVFLNSTWG). Residues N27, N64, and N85 are each glycosylated (N-linked (GlcNAc...) asparagine). At 32–486 (EIHASAHRFE…QCGPAPPVQG (455 aa)) the chain is on the extracellular side. LDL-receptor class B repeat units lie at residues 53–97 (EMIY…DPLN), 98–145 (RNLF…DICR), 146–190 (RQLY…DQLS), and 191–236 (DRIF…NEDA). 2 N-linked (GlcNAc...) asparagine glycosylation sites follow: N261 and N314. EGF-like domains are found at residues 322–359 (EGDR…ARCE) and 394–431 (EYHK…ERCE). 5 disulfide bridges follow: C334/C347, C349/C358, C398/C408, C402/C419, and C421/C430. N-linked (GlcNAc...) asparagine glycans are attached at residues N433 and N464. The chain crosses the membrane as a helical span at residues 487-507 (PLIIVIVLGLVTTSGLVALTV). Residues 508–605 (HGVRLIYKPK…IHSMEDNLLS (98 aa)) are Cytoplasmic-facing.

The protein belongs to the cueball family.

The protein localises to the cell membrane. Has a role in spermatogenesis and oogenesis. This Drosophila grimshawi (Hawaiian fruit fly) protein is Protein cueball.